Here is a 912-residue protein sequence, read N- to C-terminus: Protein translocase subunit SecA (912 aa).

Residues glutamine 87, 105-109 (GEGKT), and aspartate 512 each bind ATP. The Zn(2+) site is built by cysteine 896, cysteine 898, cysteine 907, and histidine 908.

The protein belongs to the SecA family. As to quaternary structure, monomer and homodimer. Part of the essential Sec protein translocation apparatus which comprises SecA, SecYEG and auxiliary proteins SecDF-YajC and YidC. Zn(2+) serves as cofactor.

Its subcellular location is the cell inner membrane. The protein localises to the cytoplasm. It carries out the reaction ATP + H2O + cellular proteinSide 1 = ADP + phosphate + cellular proteinSide 2.. Its function is as follows. Part of the Sec protein translocase complex. Interacts with the SecYEG preprotein conducting channel. Has a central role in coupling the hydrolysis of ATP to the transfer of proteins into and across the cell membrane, serving both as a receptor for the preprotein-SecB complex and as an ATP-driven molecular motor driving the stepwise translocation of polypeptide chains across the membrane. In Pseudomonas fluorescens (strain Pf0-1), this protein is Protein translocase subunit SecA.